Consider the following 455-residue polypeptide: GTPase Der (455 aa).

2 consecutive EngA-type G domains span residues 4 to 169 and 178 to 353; these read PVVA…PPKD and IQLS…EQHR. Residues 10 to 17, 57 to 61, 120 to 123, 184 to 191, 231 to 235, and 296 to 299 each bind GTP; these read GRPNVGKS, DTGGL, NKCE, DTAGI, and NKWD. The KH-like domain occupies 354–439; it reads RRVSTSVVNE…PVKLFWRGKQ (86 aa).

The protein belongs to the TRAFAC class TrmE-Era-EngA-EngB-Septin-like GTPase superfamily. EngA (Der) GTPase family. As to quaternary structure, associates with the 50S ribosomal subunit.

Its function is as follows. GTPase that plays an essential role in the late steps of ribosome biogenesis. The sequence is that of GTPase Der from Synechococcus sp. (strain CC9311).